We begin with the raw amino-acid sequence, 68 residues long: MNRIACTVHGRVQGVGFRYWTKRKAAALGLRGWVKNAPDGTVMLEAAGEAGLWMSLPGRCTAGLPSAP.

Residues 3-68 (RIACTVHGRV…RCTAGLPSAP (66 aa)) enclose the Acylphosphatase-like domain. Residues Arg-18 and Asn-36 contribute to the active site.

Belongs to the acylphosphatase family.

It catalyses the reaction an acyl phosphate + H2O = a carboxylate + phosphate + H(+). This is Acylphosphatase (acyP) from Oleidesulfovibrio alaskensis (strain ATCC BAA-1058 / DSM 17464 / G20) (Desulfovibrio alaskensis).